A 75-amino-acid polypeptide reads, in one-letter code: Small ribosomal subunit protein bS16 (75 aa).

The protein belongs to the bacterial ribosomal protein bS16 family.

The sequence is that of Small ribosomal subunit protein bS16 from Nitratiruptor sp. (strain SB155-2).